We begin with the raw amino-acid sequence, 85 residues long: Large ribosomal subunit protein bL27 (85 aa).

Residues 1–22 (MAHKKGGGSSRNGRDSNAQRRG) form a disordered region.

This sequence belongs to the bacterial ribosomal protein bL27 family.

The polypeptide is Large ribosomal subunit protein bL27 (Sorangium cellulosum (strain So ce56) (Polyangium cellulosum (strain So ce56))).